Consider the following 557-residue polypeptide: D-arabinono-1,4-lactone oxidase (557 aa).

The FAD-binding PCMH-type domain occupies 26–209 (FFCKPQAIFQ…THVTLRTIPK (184 aa)). Pros-8alpha-FAD histidine is present on histidine 63.

This sequence belongs to the oxygen-dependent FAD-linked oxidoreductase family. FAD serves as cofactor.

It localises to the mitochondrion membrane. It carries out the reaction D-arabinono-1,4-lactone + O2 = dehydro-D-arabinono-1,4-lactone + H2O2 + H(+). It participates in cofactor biosynthesis; D-erythroascorbate biosynthesis; dehydro-D-arabinono-1,4-lactone from D-arabinose: step 2/2. This chain is D-arabinono-1,4-lactone oxidase (ALO1), found in Debaryomyces hansenii (strain ATCC 36239 / CBS 767 / BCRC 21394 / JCM 1990 / NBRC 0083 / IGC 2968) (Yeast).